The sequence spans 469 residues: Mitochondrial distribution and morphology protein 10 (469 aa).

It belongs to the MDM10 family. In terms of assembly, component of the ER-mitochondria encounter structure (ERMES) or MDM complex, composed of MMM1, MDM10, MDM12 and MDM34. Associates with the mitochondrial outer membrane sorting assembly machinery SAM(core) complex.

It localises to the mitochondrion outer membrane. Component of the ERMES/MDM complex, which serves as a molecular tether to connect the endoplasmic reticulum and mitochondria. Components of this complex are involved in the control of mitochondrial shape and protein biogenesis and may function in phospholipid exchange. MDM10 is involved in the late assembly steps of the general translocase of the mitochondrial outer membrane (TOM complex). Functions in the TOM40-specific route of the assembly of outer membrane beta-barrel proteins, including the association of TOM40 with the receptor TOM22 and small TOM proteins. Can associate with the SAM(core) complex as well as the MDM12-MMM1 complex, both involved in late steps of the major beta-barrel assembly pathway, that is responsible for biogenesis of all outer membrane beta-barrel proteins. May act as a switch that shuttles between both complexes and channels precursor proteins into the TOM40-specific pathway. Plays a role in mitochondrial morphology and in the inheritance of mitochondria. The protein is Mitochondrial distribution and morphology protein 10 of Scheffersomyces stipitis (strain ATCC 58785 / CBS 6054 / NBRC 10063 / NRRL Y-11545) (Yeast).